Here is a 912-residue protein sequence, read N- to C-terminus: MINSLLTRVFGSRNERQLRQLNRLVTQINALEPTIEKLSDAELQAKTPEFKQRLAAGESLDKILPEAFAVCREASRRVLGMRHYDVQLIGGMVLHLGKIAEMRTGEGKTLVATLPVYLNALEGQGVHVVTVNDYLARRDAAQMGKLYNWLGLSVGVVYPGMPHSDKHAAYAADITYGTNNEFGFDYLRDNMALSRADRYQRKLHYAIVDEVDSILIDEARTPLIISGPADESPELYIRVNRIVPQLTKQESEEGEGDYWIDEKGKQVHLSEAGMGHAEELLLQAGILENADDGLYAAQNLSVVHHLNAALRAHAIYQRDVDYIVRDGEVVIVDEFTGRTLSGRRWSDGLHQAVEAKEGVPVQRENQTLASITFQNLFRMYKKLSGMTGTADTEAYEFQSIYGLEVVVIPTNRPTVRKDHPDQVFLNRKGKFNAVLADIEDCAKRGQPVLVGTTSIETSEMLSEHLRKAGVKHEVLNAKQHEREATIVANAGQPGAVTIATNMAGRGTDIVLGGSLEAEYHALGEDATEEARFKIKTDWQRRHDAVKAAGGLHIIGTERHESRRIDNQLRGRAGRQGDPGSSRFYLSLEDNLMRIFASDWVQKAMRMMGMKEDDVIEDRLVSRQIEKAQRKVEAHNFDIRKNLLDFDDVNNDQRKVIYAQRDDLLDAESVKDNVDGIRGDVIYDLVARFVPPNSVDEQWDLQGLEATLESELGMPLALRELAKTQEELDAEQIAAKVQTAVDAHFAEKEAAVGADTMRALEKHVMLTVLDQGWKEHLAKMDYLRQGIYLRGYAQKQPKQEYKKEAFELFSEMLENVKREVINLLARVRIRSEEEVAELEEQERRQAEARLLASQFQHQDAGGYGADEEVEQMQGGNAPVPVSQVTRDEPKVGRNDPCPCGSGKKYKHCHGQLS.

Residues glutamine 87, 105–109 (GEGKT), and aspartate 508 each bind ATP. The interval 855 to 912 (QHQDAGGYGADEEVEQMQGGNAPVPVSQVTRDEPKVGRNDPCPCGSGKKYKHCHGQLS) is disordered. The Zn(2+) site is built by cysteine 896, cysteine 898, cysteine 907, and histidine 908. The span at 902 to 912 (KKYKHCHGQLS) shows a compositional bias: basic residues.

It belongs to the SecA family. As to quaternary structure, monomer and homodimer. Part of the essential Sec protein translocation apparatus which comprises SecA, SecYEG and auxiliary proteins SecDF-YajC and YidC. Zn(2+) serves as cofactor.

Its subcellular location is the cell inner membrane. It localises to the cytoplasm. The enzyme catalyses ATP + H2O + cellular proteinSide 1 = ADP + phosphate + cellular proteinSide 2.. Functionally, part of the Sec protein translocase complex. Interacts with the SecYEG preprotein conducting channel. Has a central role in coupling the hydrolysis of ATP to the transfer of proteins into and across the cell membrane, serving both as a receptor for the preprotein-SecB complex and as an ATP-driven molecular motor driving the stepwise translocation of polypeptide chains across the membrane. This chain is Protein translocase subunit SecA, found in Xanthomonas campestris pv. campestris (strain B100).